A 376-amino-acid chain; its full sequence is tRNA (guanine(26)-N(2))-dimethyltransferase (376 aa).

The region spanning 4-373 (VAVKEGLARI…APFGVVAEVM (370 aa)) is the Trm1 methyltransferase domain. Residues R36, R61, D78, D120, and A121 each coordinate S-adenosyl-L-methionine.

Belongs to the class I-like SAM-binding methyltransferase superfamily. Trm1 family.

It catalyses the reaction guanosine(26) in tRNA + 2 S-adenosyl-L-methionine = N(2)-dimethylguanosine(26) in tRNA + 2 S-adenosyl-L-homocysteine + 2 H(+). In terms of biological role, dimethylates a single guanine residue at position 26 of a number of tRNAs using S-adenosyl-L-methionine as donor of the methyl groups. The polypeptide is tRNA (guanine(26)-N(2))-dimethyltransferase (Thermococcus kodakarensis (strain ATCC BAA-918 / JCM 12380 / KOD1) (Pyrococcus kodakaraensis (strain KOD1))).